The chain runs to 123 residues: Large ribosomal subunit protein uL29 (123 aa).

N6-acetyllysine is present on Lys-19. Residue Lys-25 forms a Glycyl lysine isopeptide (Lys-Gly) (interchain with G-Cter in SUMO2) linkage. Ser-29 bears the Phosphoserine mark. N6-acetyllysine is present on Lys-43. The interval Pro-85–Ala-123 is disordered. The span at Lys-86–Asn-96 shows a compositional bias: basic residues.

The protein belongs to the universal ribosomal protein uL29 family. Component of the large ribosomal subunit.

The protein localises to the cytoplasm. Component of the large ribosomal subunit. The ribosome is a large ribonucleoprotein complex responsible for the synthesis of proteins in the cell. The chain is Large ribosomal subunit protein uL29 (RPL35) from Oryctolagus cuniculus (Rabbit).